Reading from the N-terminus, the 218-residue chain is Large ribosomal subunit protein uL2c (218 aa).

Residues glycine 165 to proline 192 are disordered.

Belongs to the universal ribosomal protein uL2 family. In terms of assembly, part of the 50S ribosomal subunit.

It localises to the plastid. The protein resides in the chloroplast. The sequence is that of Large ribosomal subunit protein uL2c (rpl2) from Bigelowiella natans (Pedinomonas minutissima).